The primary structure comprises 158 residues: Transcription elongation factor GreA (158 aa).

Residues 10–76 are a coiled coil; it reads TLEGKKKLEE…QIEKMIRNAE (67 aa).

Belongs to the GreA/GreB family.

Necessary for efficient RNA polymerase transcription elongation past template-encoded arresting sites. The arresting sites in DNA have the property of trapping a certain fraction of elongating RNA polymerases that pass through, resulting in locked ternary complexes. Cleavage of the nascent transcript by cleavage factors such as GreA or GreB allows the resumption of elongation from the new 3'terminus. GreA releases sequences of 2 to 3 nucleotides. The sequence is that of Transcription elongation factor GreA from Halalkalibacterium halodurans (strain ATCC BAA-125 / DSM 18197 / FERM 7344 / JCM 9153 / C-125) (Bacillus halodurans).